The sequence spans 251 residues: MNLISIPAFQDNYIWLLDNQQGHCIIVDPGEAQPVLETLDRLNLTPDAIVLTHHHHDHVGGVAQIVARYSGLKVYGPQETADKGANHIVHDGETIEINGQKFATIAVPGHTLGHVAFYSAPYLFCGDTIFSAGCGRLFEGTAEQMFNSFQQLAQLPDNTLICCAHEYTLSNLKFARAILPKDRHIETYQQQVEALRAKGQSSVPTTLQLERKINLFLRCHDTDLQRELGFHTPPEHLHSVFSELRLRKDNF.

The Zn(2+) site is built by His53, His55, Asp57, His58, His110, Asp127, and His165.

This sequence belongs to the metallo-beta-lactamase superfamily. Glyoxalase II family. In terms of assembly, monomer. Requires Zn(2+) as cofactor.

The catalysed reaction is an S-(2-hydroxyacyl)glutathione + H2O = a 2-hydroxy carboxylate + glutathione + H(+). It functions in the pathway secondary metabolite metabolism; methylglyoxal degradation; (R)-lactate from methylglyoxal: step 2/2. In terms of biological role, thiolesterase that catalyzes the hydrolysis of S-D-lactoyl-glutathione to form glutathione and D-lactic acid. This Serratia proteamaculans (strain 568) protein is Hydroxyacylglutathione hydrolase.